Reading from the N-terminus, the 181-residue chain is Malignant T-cell-amplified sequence 2 (181 aa).

In terms of domain architecture, PUA spans 92 to 171 (LPHQQVDKGA…IGIENIHYLN (80 aa)).

This sequence belongs to the MCTS1 family.

Its subcellular location is the cytoplasm. This chain is Malignant T-cell-amplified sequence 2, found in Mus musculus (Mouse).